A 315-amino-acid chain; its full sequence is Calcium homeostasis modulator protein 4 (315 aa).

The Cytoplasmic segment spans residues 1–14 (MSPDLNCISSSLLR). The helical transmembrane segment at 15-37 (SEPCINSLIAILTVCGQQLFSSY) threads the bilayer. The Extracellular portion of the chain corresponds to 38–48 (TFSCPCQVGKN). Cystine bridges form between Cys-41/Cys-132 and Cys-43/Cys-163. Residues 49-71 (FYYGSAFLVVPALILLIAGYALR) traverse the membrane as a helical segment. At 72–104 (GQMWTVASEYCCCSCTPPYRRSSPLERRLACLM) the chain is on the cytoplasmic side. The helical transmembrane segment at 105–130 (FFDITGRALVAPLTWLTVTLLTGTYY) threads the bilayer. Topologically, residues 131–184 (ECAASEFASVDQYPMFANVTPSKREEMLAGFPCYTSAPSDVIPIRDEVALLHRY) are extracellular. A helical transmembrane segment spans residues 185 to 208 (QSQMLGWILVVLATIALLLSKCLA). Over 209 to 315 (RCCSPLTSLQ…DRQEGIEMKP (107 aa)) the chain is Cytoplasmic.

This sequence belongs to the CALHM family. As to quaternary structure, oligomerizes to form decameric and undecameric channels. Two hemichannels can assemble in a tail-to-tail manner to form a gap junction.

It is found in the cell membrane. Its function is as follows. May assemble to form gap junction channel-like structures involved in intercellular communication. Channel gating and ion conductance are likely regulated by membrane lipids rather than by membrane depolarization or extracellular calcium levels. The sequence is that of Calcium homeostasis modulator protein 4 from Mus musculus (Mouse).